We begin with the raw amino-acid sequence, 348 residues long: Protein RecA (348 aa).

65–72 (GPESSGKT) serves as a coordination point for ATP. Residues 326–336 (LLTPAEEKPET) show a composition bias toward basic and acidic residues. A disordered region spans residues 326-348 (LLTPAEEKPETDAAPEIEENEEF). Residues 338-348 (AAPEIEENEEF) are compositionally biased toward acidic residues.

Belongs to the RecA family.

The protein resides in the cytoplasm. Can catalyze the hydrolysis of ATP in the presence of single-stranded DNA, the ATP-dependent uptake of single-stranded DNA by duplex DNA, and the ATP-dependent hybridization of homologous single-stranded DNAs. It interacts with LexA causing its activation and leading to its autocatalytic cleavage. In Aliivibrio fischeri (strain ATCC 700601 / ES114) (Vibrio fischeri), this protein is Protein RecA.